The following is a 376-amino-acid chain: UDP-N-acetylglucosamine--N-acetylmuramyl-(pentapeptide) pyrophosphoryl-undecaprenol N-acetylglucosamine transferase (376 aa).

UDP-N-acetyl-alpha-D-glucosamine is bound by residues 11-13 (TGG), Asn117, Arg160, Ser208, and Gln310.

Belongs to the glycosyltransferase 28 family. MurG subfamily.

The protein localises to the cell inner membrane. It catalyses the reaction di-trans,octa-cis-undecaprenyl diphospho-N-acetyl-alpha-D-muramoyl-L-alanyl-D-glutamyl-meso-2,6-diaminopimeloyl-D-alanyl-D-alanine + UDP-N-acetyl-alpha-D-glucosamine = di-trans,octa-cis-undecaprenyl diphospho-[N-acetyl-alpha-D-glucosaminyl-(1-&gt;4)]-N-acetyl-alpha-D-muramoyl-L-alanyl-D-glutamyl-meso-2,6-diaminopimeloyl-D-alanyl-D-alanine + UDP + H(+). Its pathway is cell wall biogenesis; peptidoglycan biosynthesis. Its function is as follows. Cell wall formation. Catalyzes the transfer of a GlcNAc subunit on undecaprenyl-pyrophosphoryl-MurNAc-pentapeptide (lipid intermediate I) to form undecaprenyl-pyrophosphoryl-MurNAc-(pentapeptide)GlcNAc (lipid intermediate II). This is UDP-N-acetylglucosamine--N-acetylmuramyl-(pentapeptide) pyrophosphoryl-undecaprenol N-acetylglucosamine transferase from Rickettsia conorii (strain ATCC VR-613 / Malish 7).